The primary structure comprises 492 residues: Replication factor C large subunit (492 aa).

Residue 46–53 (GPPGSGKT) participates in ATP binding. Residues 445-492 (VIPKRPKISDNQISEILTKDNNPKDDVKKASKKPESTSKKQATLDKFF) form a disordered region. Positions 461-482 (LTKDNNPKDDVKKASKKPESTS) are enriched in basic and acidic residues.

The protein belongs to the activator 1 small subunits family. RfcL subfamily. In terms of assembly, heteromultimer composed of small subunits (RfcS) and large subunits (RfcL).

In terms of biological role, part of the RFC clamp loader complex which loads the PCNA sliding clamp onto DNA. In Methanococcus vannielii (strain ATCC 35089 / DSM 1224 / JCM 13029 / OCM 148 / SB), this protein is Replication factor C large subunit.